We begin with the raw amino-acid sequence, 242 residues long: Type III pantothenate kinase (242 aa).

7–14 (DLGNSRFK) is an ATP binding site. Substrate contacts are provided by residues tyrosine 91 and 98–101 (GVDR). Aspartate 100 functions as the Proton acceptor in the catalytic mechanism. Residue threonine 121 participates in ATP binding. Threonine 171 provides a ligand contact to substrate.

It belongs to the type III pantothenate kinase family. As to quaternary structure, homodimer. NH4(+) is required as a cofactor. The cofactor is K(+).

It localises to the cytoplasm. The catalysed reaction is (R)-pantothenate + ATP = (R)-4'-phosphopantothenate + ADP + H(+). Its pathway is cofactor biosynthesis; coenzyme A biosynthesis; CoA from (R)-pantothenate: step 1/5. Functionally, catalyzes the phosphorylation of pantothenate (Pan), the first step in CoA biosynthesis. This Xylella fastidiosa (strain M23) protein is Type III pantothenate kinase.